Reading from the N-terminus, the 356-residue chain is Outer membrane protein Omp38 (356 aa).

An N-terminal signal peptide occupies residues 1–19; it reads MKLSRIALATMLVAAPLAA. The OmpA-like domain occupies 221–339; that stretch reads ELTEDLNMEL…RVFATITGSR (119 aa).

It belongs to the outer membrane OOP (TC 1.B.6) superfamily. As to quaternary structure, homotrimer.

The protein localises to the cell outer membrane. Porin. Induces apoptosis in human cells through caspases-dependent and AIF-dependent pathways. Purified Omp38 enters the cells and localizes to the mitochondria, which leads to a release of proapoptotic molecules such as cytochrome c and AIF (apoptosis-inducing factor). The polypeptide is Outer membrane protein Omp38 (omp38) (Acinetobacter baumannii (strain ATCC 17978 / DSM 105126 / CIP 53.77 / LMG 1025 / NCDC KC755 / 5377)).